The sequence spans 502 residues: ATP-dependent DNA helicase uvsW (502 aa).

The Helicase ATP-binding domain occupies 122-280; that stretch reads VFEGLVNRRR…QYVGMFGEIF (159 aa). 135–142 contacts ATP; it reads LPTSAGKS. The DEAH box motif lies at 232 to 235; sequence DECH. The 167-residue stretch at 335–501 folds into the Helicase C-terminal domain; the sequence is WIAKLAIKLA…KFNYVMKTVN (167 aa).

In terms of assembly, probably interacts with UvsW.1. Interacts with gp32. Requires Mg(2+) as cofactor.

It catalyses the reaction Couples ATP hydrolysis with the unwinding of duplex DNA by translocating in the 3'-5' direction.. It carries out the reaction ATP + H2O = ADP + phosphate + H(+). Its activity is regulated as follows. Unwinding activity is strongly stimulated by single-stranded binding protein gp32, the ssDNA annealing activity is partially inhibited by gp32 and strongly inhibited by ATP-gamma-S. Another study did not find gp32 stimulation of helicase activity. Holliday junction (HJ) branch migration is inhibited by ATP-gamma-S. Plays important roles in recombination-dependent DNA repair and the reorganization of stalled replication forks during viral DNA synthesis. Active on in vivo-derived T4 DNA; viral DNA is highly modified by hydroxymethylation and glucosylation of cytosine residues. Helps process Holliday junction (HJ) intermediates to mature products by catalyzing branch migration. Probably able to catalyze replication fork regression. Unwinds HJ and Y-branched but not linear double-stranded (ds)DNA; unwinding requires ATP and Mg(2+). Unwinds dsDNA with a 3'-single-stranded (ss)DNA overhang, suggesting it is a 3'-5' helicase. Another study does not find this activity. Unwinds D- and R-loops. Also anneals ssDNA; ATP stimulates annealing. Has ssDNA and dsDNA-stimulated ATPase activity, also hydrolyzes GTP in the presence of DNA. The polypeptide is ATP-dependent DNA helicase uvsW (Enterobacteria phage T4 (Bacteriophage T4)).